Consider the following 73-residue polypeptide: Translation initiation factor IF-1 (73 aa).

Residues methionine 1–lysine 73 form the S1-like domain.

It belongs to the IF-1 family. Component of the 30S ribosomal translation pre-initiation complex which assembles on the 30S ribosome in the order IF-2 and IF-3, IF-1 and N-formylmethionyl-tRNA(fMet); mRNA recruitment can occur at any time during PIC assembly.

The protein localises to the cytoplasm. Functionally, one of the essential components for the initiation of protein synthesis. Stabilizes the binding of IF-2 and IF-3 on the 30S subunit to which N-formylmethionyl-tRNA(fMet) subsequently binds. Helps modulate mRNA selection, yielding the 30S pre-initiation complex (PIC). Upon addition of the 50S ribosomal subunit IF-1, IF-2 and IF-3 are released leaving the mature 70S translation initiation complex. The chain is Translation initiation factor IF-1 from Anaeromyxobacter dehalogenans (strain 2CP-C).